A 253-amino-acid polypeptide reads, in one-letter code: Putative glutamine amidotransferase PB2B2.05 (253 aa).

Residues 5–228 (IIALSVGFSN…INRSKWHMKQ (224 aa)) enclose the Glutamine amidotransferase type-1 domain. Residue cysteine 100 is the Nucleophile of the active site. Catalysis depends on residues histidine 200 and glutamate 202.

It localises to the cytoplasm. It is found in the nucleus. The sequence is that of Putative glutamine amidotransferase PB2B2.05 from Schizosaccharomyces pombe (strain 972 / ATCC 24843) (Fission yeast).